The sequence spans 348 residues: Protein RecA (348 aa).

An ATP-binding site is contributed by 68–75 (GPESSGKT).

The protein belongs to the RecA family.

The protein localises to the cytoplasm. Functionally, can catalyze the hydrolysis of ATP in the presence of single-stranded DNA, the ATP-dependent uptake of single-stranded DNA by duplex DNA, and the ATP-dependent hybridization of homologous single-stranded DNAs. It interacts with LexA causing its activation and leading to its autocatalytic cleavage. This is Protein RecA from Rhodococcus opacus (strain B4).